A 76-amino-acid polypeptide reads, in one-letter code: Small ribosomal subunit protein eS17 (76 aa).

Belongs to the eukaryotic ribosomal protein eS17 family.

The protein is Small ribosomal subunit protein eS17 of Metallosphaera sedula (strain ATCC 51363 / DSM 5348 / JCM 9185 / NBRC 15509 / TH2).